Here is a 381-residue protein sequence, read N- to C-terminus: Succinyl-diaminopimelate desuccinylase (381 aa).

Residue H69 participates in Zn(2+) binding. Residue D71 is part of the active site. Residue D103 coordinates Zn(2+). E137 functions as the Proton acceptor in the catalytic mechanism. Residues E138, E166, and H355 each contribute to the Zn(2+) site.

The protein belongs to the peptidase M20A family. DapE subfamily. As to quaternary structure, homodimer. Zn(2+) serves as cofactor. Requires Co(2+) as cofactor.

It catalyses the reaction N-succinyl-(2S,6S)-2,6-diaminopimelate + H2O = (2S,6S)-2,6-diaminopimelate + succinate. The protein operates within amino-acid biosynthesis; L-lysine biosynthesis via DAP pathway; LL-2,6-diaminopimelate from (S)-tetrahydrodipicolinate (succinylase route): step 3/3. Functionally, catalyzes the hydrolysis of N-succinyl-L,L-diaminopimelic acid (SDAP), forming succinate and LL-2,6-diaminopimelate (DAP), an intermediate involved in the bacterial biosynthesis of lysine and meso-diaminopimelic acid, an essential component of bacterial cell walls. This is Succinyl-diaminopimelate desuccinylase from Rickettsia africae (strain ESF-5).